We begin with the raw amino-acid sequence, 574 residues long: MTAEALSSGELKAIRPYPARTGPKGNLVYKLITTTDHKMIGIMYCVACFIFFFVGGLLALLMRTELAAPGLQFLSNEQFNQLFTMHGTIMLLFYATPIVFGFANLVLPLQIGAPDVAFPRLNAFSFWLFLFGAAIGMAGFITPGGAADFGWTAYTPLTDAIHSPGVGGDLWIMGLIVAGLGTILGAVNMITTVVCLRAPGMTMFRMPIFTWNILVTSILVLIAFPLLTAALFGLAADRHLGAHIYDAANGGVLLWQHLFWFFGHPEVYIIALPFFGIVSEIFPVFSRKPIFGYTTLVYATLSIAALSVAVWAHHMFATGAVLLPFFSFMTYLIAVPTGIKFFNWVGTMWKGQLTFETPMLFSVGFAVTFLLGGLTGVLLASPPLDFHVTDSYFVVAHFHYVLFGTIVFSTFAGIYFWFPKMTGRLLDEQLGKLHFWLTFIGFHTTFLVQHWLGDMGMPRRYADYLPTDGFQGLNVVSTIGSFILGASMFPFVWNVFKSWRYGEVVTVDDPWGYGNSLEWATSCPPPRHNFTELPRIRSERPAFELHYPHMVERLRDEAYVGRRHAEELVEVSLH.

Residues 40–60 traverse the membrane as a helical segment; the sequence is IGIMYCVACFIFFFVGGLLAL. His86 lines the Fe(II)-heme a pocket. The next 6 helical transmembrane spans lie at 89–109, 121–141, 170–190, 213–233, 258–278, and 290–310; these read IMLL…VLPL, LNAF…AGFI, LWIM…VNMI, ILVT…ALFG, LFWF…FGIV, and IFGY…SVAV. Residues His264 and Tyr268 each coordinate Cu cation. The 1'-histidyl-3'-tyrosine (His-Tyr) cross-link spans 264–268; sequence HPEVY. Residues His313 and His314 each contribute to the Cu cation site. 2 helical membrane passes run 315 to 335 and 359 to 379; these read MFAT…LIAV and MLFS…GVLL. Residue His397 coordinates heme a3. A run of 3 helical transmembrane segments spans residues 398–418, 433–453, and 476–496; these read FHYV…YFWF, LHFW…HWLG, and VSTI…WNVF. His399 lines the Fe(II)-heme a pocket.

It belongs to the heme-copper respiratory oxidase family. As to quaternary structure, associates with subunits II, III and IV to form cytochrome c oxidase. Cu(2+) serves as cofactor. Heme is required as a cofactor.

The protein localises to the cell membrane. The catalysed reaction is 4 Fe(II)-[cytochrome c] + O2 + 8 H(+)(in) = 4 Fe(III)-[cytochrome c] + 2 H2O + 4 H(+)(out). The protein operates within energy metabolism; oxidative phosphorylation. Its function is as follows. Cytochrome c oxidase is the component of the respiratory chain that catalyzes the reduction of oxygen to water. Subunits 1-3 form the functional core of the enzyme complex. CO I is the catalytic subunit of the enzyme. Electrons originating in cytochrome c are transferred via the copper A center of subunit 2 and heme A of subunit 1 to the bimetallic center formed by heme A3 and copper B. The polypeptide is Probable cytochrome c oxidase subunit 1 (ctaD) (Mycobacterium leprae (strain TN)).